Consider the following 320-residue polypeptide: Retron Ec86 reverse transcriptase (320 aa).

In terms of domain architecture, Reverse transcriptase spans 34 to 248 (VETLRLLIYT…SQRKVTGLVI (215 aa)). Mg(2+) is bound by residues Asp119, Asp197, and Asp198. The tract at residues 230 to 320 (KKTCISGPRS…GKNPLNKAKT (91 aa)) is necessary and required for recognition and binding of RNA.

The protein belongs to the bacterial reverse transcriptase family.

The catalysed reaction is DNA(n) + a 2'-deoxyribonucleoside 5'-triphosphate = DNA(n+1) + diphosphate. In terms of biological role, reverse transcriptase (RT) component of antiviral defense system retron Ec86, composed of a non-coding RNA (ncRNA), a ribosyltransferase/DNA-binding protein and this RT. Expression of the 3-gene retron confers protection against bacteriophage T5. At multiplicity of infection (MOI) of 0.02 cultures grow normally when infected with T5 without collapsing, at MOI 2 cultures enter growth stasis. Responsible for synthesis of msDNA (a branched molecule with RNA linked by a 2',5'-phosphodiester bond to ssDNA). The retron transcript serves as primer (from a conserved internal G residue) and template for the reaction, and codes for the RT. Recognizes only its cognate RNA as a primer template. Overexpression of the ncRNA and RT (without the ribosyltransferase), which leads to increased levels of msDNA, is mutagenic in vivo. This may be due to a mismatch in the msDNA stem which binds and sequesters MutS and/or MutL. The sequence is that of Retron Ec86 reverse transcriptase from Escherichia coli.